Here is a 326-residue protein sequence, read N- to C-terminus: Ketol-acid reductoisomerase (NADP(+)) (326 aa).

A KARI N-terminal Rossmann domain is found at 1–180 (MDIIHDNAAD…GLTRGGVLEC (180 aa)). Residues 24–27 (YGAQ), R47, and S51 each bind NADP(+). H106 is a catalytic residue. G132 contacts NADP(+). The KARI C-terminal knotted domain occupies 181 to 326 (TMAQETYEDL…AKIRSLFERN (146 aa)). Mg(2+) is bound by residues D189, E193, E225, and E229. Residue S250 coordinates substrate.

This sequence belongs to the ketol-acid reductoisomerase family. Mg(2+) is required as a cofactor.

The catalysed reaction is (2R)-2,3-dihydroxy-3-methylbutanoate + NADP(+) = (2S)-2-acetolactate + NADPH + H(+). It catalyses the reaction (2R,3R)-2,3-dihydroxy-3-methylpentanoate + NADP(+) = (S)-2-ethyl-2-hydroxy-3-oxobutanoate + NADPH + H(+). It functions in the pathway amino-acid biosynthesis; L-isoleucine biosynthesis; L-isoleucine from 2-oxobutanoate: step 2/4. The protein operates within amino-acid biosynthesis; L-valine biosynthesis; L-valine from pyruvate: step 2/4. Involved in the biosynthesis of branched-chain amino acids (BCAA). Catalyzes an alkyl-migration followed by a ketol-acid reduction of (S)-2-acetolactate (S2AL) to yield (R)-2,3-dihydroxy-isovalerate. In the isomerase reaction, S2AL is rearranged via a Mg-dependent methyl migration to produce 3-hydroxy-3-methyl-2-ketobutyrate (HMKB). In the reductase reaction, this 2-ketoacid undergoes a metal-dependent reduction by NADPH to yield (R)-2,3-dihydroxy-isovalerate. The polypeptide is Ketol-acid reductoisomerase (NADP(+)) (Akkermansia muciniphila (strain ATCC BAA-835 / DSM 22959 / JCM 33894 / BCRC 81048 / CCUG 64013 / CIP 107961 / Muc)).